We begin with the raw amino-acid sequence, 1361 residues long: DNA-directed RNA polymerase subunit beta (1361 aa).

Belongs to the RNA polymerase beta chain family. The RNAP catalytic core consists of 2 alpha, 1 beta, 1 beta' and 1 omega subunit. When a sigma factor is associated with the core the holoenzyme is formed, which can initiate transcription.

It catalyses the reaction RNA(n) + a ribonucleoside 5'-triphosphate = RNA(n+1) + diphosphate. Functionally, DNA-dependent RNA polymerase catalyzes the transcription of DNA into RNA using the four ribonucleoside triphosphates as substrates. This chain is DNA-directed RNA polymerase subunit beta, found in Cellvibrio japonicus (strain Ueda107) (Pseudomonas fluorescens subsp. cellulosa).